The chain runs to 119 residues: Ribonuclease P protein component (119 aa).

The protein belongs to the RnpA family. As to quaternary structure, consists of a catalytic RNA component (M1 or rnpB) and a protein subunit.

It carries out the reaction Endonucleolytic cleavage of RNA, removing 5'-extranucleotides from tRNA precursor.. Functionally, RNaseP catalyzes the removal of the 5'-leader sequence from pre-tRNA to produce the mature 5'-terminus. It can also cleave other RNA substrates such as 4.5S RNA. The protein component plays an auxiliary but essential role in vivo by binding to the 5'-leader sequence and broadening the substrate specificity of the ribozyme. This is Ribonuclease P protein component from Pectobacterium atrosepticum (strain SCRI 1043 / ATCC BAA-672) (Erwinia carotovora subsp. atroseptica).